Consider the following 676-residue polypeptide: Cysteine-rich receptor-like protein kinase 4 (676 aa).

Residues 1 to 16 (MSFFWLFPFLLHLSFA) form the signal peptide. The Extracellular segment spans residues 17-287 (DSLSPLSAPV…ISERGKGRNS (271 aa)). Gnk2-homologous domains lie at 31–135 (HLNH…HRNI) and 146–246 (ILLN…NYSF). N-linked (GlcNAc...) asparagine glycans are attached at residues asparagine 33, asparagine 46, asparagine 64, asparagine 152, asparagine 181, asparagine 243, and asparagine 248. Residues 252-279 (TRSSSPPSLPPRSTPQQQLKLAPPPLIS) form a disordered region. An N-linked (GlcNAc...) asparagine glycan is attached at asparagine 286. A helical transmembrane segment spans residues 288–308 (SVIIVVVVPIIALLLLFVAFF). Residues 309 to 676 (SLRAKKTRTN…DASITNVTPR (368 aa)) lie on the Cytoplasmic side of the membrane. In terms of domain architecture, Protein kinase spans 351–631 (FCETNKLGQG…QMLTTSSIAL (281 aa)). ATP is bound by residues 357 to 365 (LGQGGFGEV) and lysine 379. Tyrosine 424 is modified (phosphotyrosine). The Proton acceptor role is filled by aspartate 476. Residue threonine 516 is modified to Phosphothreonine. Phosphotyrosine is present on tyrosine 524.

The protein belongs to the protein kinase superfamily. Ser/Thr protein kinase family. CRK subfamily.

Its subcellular location is the membrane. It carries out the reaction L-seryl-[protein] + ATP = O-phospho-L-seryl-[protein] + ADP + H(+). The catalysed reaction is L-threonyl-[protein] + ATP = O-phospho-L-threonyl-[protein] + ADP + H(+). The polypeptide is Cysteine-rich receptor-like protein kinase 4 (CRK4) (Arabidopsis thaliana (Mouse-ear cress)).